A 533-amino-acid chain; its full sequence is MSAGCTQLVWGGRLHWGASHLLSCLLALCALWVLAAAEPTEGGSANVQGVGEAALYQGRGQHRVPSEDNVAVLSDQWEPSSFQPSSAFSGTDLGTMVADSYRGPGNSDRRSNKELPILLWWSENLFPHFPGDAERIDCPLSSCMVTKNKSVKLHKRTKSIIFYGTDFRAYEAPLPRLPHQTWALFHEESPMNNYVLSHLPGIRLFNYTATFSRESDYPLTLQWLPTIGYLHNPALSMAEKNRWRKNGYAPVLYMQSHCDVPSDRDRYVKELMKHLEIDSYGQCMKNREHPNKRLEDTSTATTEDPEFMAFTARYKFHLAMENAICADYMTEKLWRPMHLGAIPIYRGSPSVRDWMPNNHSIIMIDDFASPKELAEFIMTLDSDDEQYLKYLEYKKPGGTTNTFLLSSMEKREWGVNDMTAPNYLNGFECFVCDKENSRIKAEKTYKKSQQGGAAPEPHIADFNHMGCPMPTPGFGSAQEIPESDSWKQMWLQDYWQSFDQGEALTAMIQRNETNQDRFWDYMHETYIKRSMNH.

The Cytoplasmic portion of the chain corresponds to 1–20 (MSAGCTQLVWGGRLHWGASH). A helical; Signal-anchor for type II membrane protein transmembrane segment spans residues 21-37 (LLSCLLALCALWVLAAA). The Lumenal portion of the chain corresponds to 38–533 (EPTEGGSANV…ETYIKRSMNH (496 aa)). Residues Asn-148, Asn-206, and Asn-358 are each glycosylated (N-linked (GlcNAc...) asparagine). The cysteines at positions 429 and 432 are disulfide-linked. The N-linked (GlcNAc...) asparagine glycan is linked to Asn-511.

The protein belongs to the glycosyltransferase 10 family.

The protein resides in the endoplasmic reticulum membrane. The catalysed reaction is L-threonyl-[protein] + GDP-beta-L-fucose = 3-O-(alpha-L-fucosyl)-L-threonyl-[protein] + GDP + H(+). It carries out the reaction L-seryl-[protein] + GDP-beta-L-fucose = 3-O-(alpha-L-fucosyl)-L-seryl-[protein] + GDP + H(+). Its pathway is protein modification; protein glycosylation. Its function is as follows. Protein O-fucosyltransferase that specifically catalyzes O-fucosylation of serine or threonine residues in EMI domains of target proteins. Attaches fucose through an O-glycosidic linkage. O-fucosylation of EMI domain-containing proteins may be required for facilitating protein folding and secretion. The sequence is that of GDP-fucose protein O-fucosyltransferase 4 (fut11) from Xenopus tropicalis (Western clawed frog).